The chain runs to 130 residues: Chorion class B protein PC10 (130 aa).

A left arm region spans residues 1–22; it reads GAWNGRLGCGCGGIAPAAELAA. The interval 23 to 93 is central domain; it reads SYGGGLGVAS…GNGALGITAE (71 aa). A right arm (Gly-rich tandem repeats) region spans residues 94 to 130; that stretch reads RGYGAGIGYEGLGLGYGAGIGYKGYGLGGCGCGCGRL.

The protein belongs to the chorion protein family.

Its function is as follows. This protein is one of many from the eggshell of the silk moth. The chain is Chorion class B protein PC10 from Antheraea polyphemus (Polyphemus moth).